A 138-amino-acid chain; its full sequence is Large ribosomal subunit protein uL16 (138 aa).

It belongs to the universal ribosomal protein uL16 family. In terms of assembly, part of the 50S ribosomal subunit.

In terms of biological role, binds 23S rRNA and is also seen to make contacts with the A and possibly P site tRNAs. This Acidiphilium cryptum (strain JF-5) protein is Large ribosomal subunit protein uL16.